A 106-amino-acid polypeptide reads, in one-letter code: Small ribosomal subunit protein mS33 (106 aa).

N-acetylserine is present on S2. The interval 81 to 106 (EQRRLKKLRGKGKPRKGEGKRATKKK) is disordered. The span at 84–94 (RLKKLRGKGKP) shows a compositional bias: basic residues. The span at 95 to 106 (RKGEGKRATKKK) shows a compositional bias: basic and acidic residues.

The protein belongs to the mitochondrion-specific ribosomal protein mS33 family. In terms of assembly, component of the mitochondrial ribosome small subunit (28S) which comprises a 12S rRNA and about 30 distinct proteins.

It is found in the mitochondrion. This Mus musculus (Mouse) protein is Small ribosomal subunit protein mS33 (Mrps33).